A 143-amino-acid chain; its full sequence is Histone H2B (143 aa).

Residues Met-1–Glu-52 are disordered. At Lys-11 the chain carries N6-acetyllysine; alternate. Residue Lys-11 forms a Glycyl lysine isopeptide (Lys-Gly) (interchain with G-Cter in SUMO); alternate linkage. Position 15 is a phosphoserine (Ser-15). Position 19 is an N6-acetyllysine (Lys-19). Residues Lys-23–Ala-39 are compositionally biased toward low complexity. A Glycyl lysine isopeptide (Lys-Gly) (interchain with G-Cter in ubiquitin) cross-link involves residue Lys-137.

The protein belongs to the histone H2B family. In terms of assembly, the nucleosome is a histone octamer containing two molecules each of H2A, H2B, H3 and H4 assembled in one H3-H4 heterotetramer and two H2A-H2B heterodimers. The octamer wraps approximately 147 bp of DNA. Monoubiquitinated to form H2BK123ub1. H2BK123ub1 gives a specific tag for epigenetic transcriptional activation and is also prerequisite for H3K4me and H3K79me formation. H2BK123ub1 also modulates the formation of double-strand breaks during meiosis and is a prerequisite for DNA-damage checkpoint activation. In terms of processing, phosphorylated to form H2BS10ph during progression through meiotic prophase. May be correlated with chromosome condensation. Post-translationally, acetylation of N-terminal lysines and particularly formation of H2BK11ac has a positive effect on transcription. Sumoylation to form H2BK6su occurs preferentially near the telomeres and represses gene transcription.

The protein resides in the nucleus. It localises to the chromosome. In terms of biological role, core component of nucleosome. Nucleosomes wrap and compact DNA into chromatin, limiting DNA accessibility to the cellular machineries which require DNA as a template. Histones thereby play a central role in transcription regulation, DNA repair, DNA replication and chromosomal stability. DNA accessibility is regulated via a complex set of post-translational modifications of histones, also called histone code, and nucleosome remodeling. This chain is Histone H2B (htbA), found in Agaricus bisporus (White button mushroom).